Here is a 124-residue protein sequence, read N- to C-terminus: Ribonuclease pancreatic (124 aa).

The disordered stretch occupies residues 1 to 21 (AESSAMKFQRQHMDSDGHPDT). Residues Lys-7 and Arg-10 each coordinate substrate. His-12 functions as the Proton acceptor in the catalytic mechanism. Disulfide bonds link Cys-26-Cys-84, Cys-40-Cys-95, Cys-58-Cys-110, and Cys-65-Cys-72. Substrate is bound by residues 41 to 45 (KPVNT), Lys-66, and Arg-85. Residue His-119 is the Proton donor of the active site.

It belongs to the pancreatic ribonuclease family. As to quaternary structure, monomer. Interacts with and forms tight 1:1 complexes with RNH1. Dimerization of two such complexes may occur. Interaction with RNH1 inhibits this protein. In terms of tissue distribution, pancreas.

The protein resides in the secreted. It carries out the reaction an [RNA] containing cytidine + H2O = an [RNA]-3'-cytidine-3'-phosphate + a 5'-hydroxy-ribonucleotide-3'-[RNA].. The enzyme catalyses an [RNA] containing uridine + H2O = an [RNA]-3'-uridine-3'-phosphate + a 5'-hydroxy-ribonucleotide-3'-[RNA].. Functionally, endonuclease that catalyzes the cleavage of RNA on the 3' side of pyrimidine nucleotides. Acts on single-stranded and double-stranded RNA. In Galea musteloides (Common yellow-toothed cavy), this protein is Ribonuclease pancreatic (RNASE1).